The primary structure comprises 525 residues: Polyamine aminopropyltransferase 1 (525 aa).

The next 6 helical transmembrane spans lie at 21-41 (ALLVLAVFVVASCGLAYELIA), 53-73 (ILQFSSIIGAYLFAMGIGSWV), 89-109 (LELLVGLFGGVSAAALFLLFA), 117-137 (LVLYALVTVIGVLVGMEIPLV), 155-175 (VLTFDYLGALAVSLLFPLVLA), and 180-200 (LVRTGFLFGLCNTAIAVWTLW). One can recognise a PABS domain in the interval 220 to 464 (AGMVGAALLA…GEWGFILAAP (245 aa)). The tract at residues 222-471 (MVGAALLAGF…AAPGRADFRP (250 aa)) is spermidine synthase. Residue Gln-259 coordinates S-methyl-5'-thioadenosine. Spermidine-binding residues include His-289 and Asp-313. Residues Asp-333 and 367 to 368 (DA) each bind S-methyl-5'-thioadenosine. Asp-385 functions as the Proton acceptor in the catalytic mechanism.

The protein belongs to the spermidine/spermine synthase family. In terms of assembly, homodimer or homotetramer.

The protein resides in the cell membrane. The enzyme catalyses S-adenosyl 3-(methylsulfanyl)propylamine + putrescine = S-methyl-5'-thioadenosine + spermidine + H(+). It participates in amine and polyamine biosynthesis; spermidine biosynthesis; spermidine from putrescine: step 1/1. Its function is as follows. Catalyzes the irreversible transfer of a propylamine group from the amino donor S-adenosylmethioninamine (decarboxy-AdoMet) to putrescine (1,4-diaminobutane) to yield spermidine. This is Polyamine aminopropyltransferase 1 from Ralstonia nicotianae (strain ATCC BAA-1114 / GMI1000) (Ralstonia solanacearum).